Here is a 675-residue protein sequence, read N- to C-terminus: Methionine--tRNA ligase (675 aa).

The 'HIGH' region signature appears at 12 to 22 (PYANGPIHLGH). Zn(2+)-binding residues include Cys-143, Cys-146, Cys-156, and Cys-159. Positions 328-332 (KMSKS) match the 'KMSKS' region motif. Residue Lys-331 participates in ATP binding. Residues 574–675 (DFAKVDLRIA…QGAQPGMRVK (102 aa)) enclose the tRNA-binding domain.

Belongs to the class-I aminoacyl-tRNA synthetase family. MetG type 1 subfamily. Homodimer. It depends on Zn(2+) as a cofactor.

It is found in the cytoplasm. The catalysed reaction is tRNA(Met) + L-methionine + ATP = L-methionyl-tRNA(Met) + AMP + diphosphate. Its function is as follows. Is required not only for elongation of protein synthesis but also for the initiation of all mRNA translation through initiator tRNA(fMet) aminoacylation. The protein is Methionine--tRNA ligase of Alkalilimnicola ehrlichii (strain ATCC BAA-1101 / DSM 17681 / MLHE-1).